Consider the following 138-residue polypeptide: Isochorismatase-like protein asqB (138 aa).

It belongs to the isochorismatase family.

It catalyses the reaction [(1'E)-5'-(3',3'-dimethyloxiran-2'-yl)-3'-hydroxy-3'-methylpent-1'-en-1'-yl]-quinolinone B = yaequinolone C. Its pathway is secondary metabolite biosynthesis. It participates in alkaloid biosynthesis. The protein operates within mycotoxin biosynthesis. Functionally, isochorismatase-like protein; part of the gene cluster that mediates the biosynthesis of the aspoquinolone mycotoxins. Within the pathway, asqB converts [(1'E)-5'-(3',3'-dimethyloxiran-2'-yl)-3'-hydroxy-3'-methylpent-1'-en-1'-yl]-quinolinone B into yaequinolone C. The first step of the pathway is catalyzed by the nonribosomal peptide synthetase asqK that condenses anthranilic acid and O-methyl-L-tyrosine to produce 4'-methoxycyclopeptin. 4'-methoxycyclopeptin is then converted to 4'-methoxydehydrocyclopeptin by the ketoglutarate-dependent dioxygenase asqJ. AsqJ also converts its first product 4'-methoxydehydrocyclopeptin to 4'-methoxycyclopenin. The following conversion of 4'-methoxycyclopenin into 4'-methoxyviridicatin is catalyzed by the cyclopenase asqI. 4'-methoxyviridicatin is the precursor of quinolone natural products, and is further converted to quinolinone B. The prenyltransferase asqH1 then catalyzes the canonical Friedel-Crafts alkylation of quinolinone B with dimethylallyl cation to yield dimethylallyl quinolone, which is subjected to FAD-dependent dehydrogenation by the FAD-linked oxidoreductase asqF to yield conjugated aryl diene. The delta(3') double bond then serves as the site of the second alkylation with DMAPP catalyzed by the prenyltransferase asqH2 to yield a carbenium ion intermediate, which can be attacked by H(2)O to yield a styrenyl quinolone containing a C3'-hydroxyprenyl chain. The FAD-dependent monooxygenase asqG performs epoxidation of the terminal C7'-C8' olefin. Finally, after dehydratation of the epoxide at C3 by asqC, the quinolone epoxide rearrangement protein asqO catalyzes an enzymatic 3-exo-tet cyclization to yield the cyclopropyl-THF ring system in aspoquinolone. This Emericella nidulans (strain FGSC A4 / ATCC 38163 / CBS 112.46 / NRRL 194 / M139) (Aspergillus nidulans) protein is Isochorismatase-like protein asqB.